A 102-amino-acid polypeptide reads, in one-letter code: Small ribosomal subunit protein uS10 (102 aa).

It belongs to the universal ribosomal protein uS10 family. In terms of assembly, part of the 30S ribosomal subunit.

Its function is as follows. Involved in the binding of tRNA to the ribosomes. This is Small ribosomal subunit protein uS10 from Thermotoga maritima (strain ATCC 43589 / DSM 3109 / JCM 10099 / NBRC 100826 / MSB8).